The following is a 1272-amino-acid chain: Regulator of nonsense transcripts 2 (1272 aa).

Over residues 1 to 114 the composition is skewed to basic and acidic residues; that stretch reads MPAERKKPAS…QEEQAKRQQE (114 aa). Disordered stretches follow at residues 1–126, 370–389, 423–445, and 490–517; these read MPAE…EKEE, DHRE…HSKG, NMPD…DIFT, and CQNK…SPDD. Residues 54–134 are a coiled coil; it reads EDKKKRLEDD…EESIQLHQEA (81 aa). The sufficient for interaction with UPF1 stretch occupies residues 94–133; the sequence is KKKHQEEERKKQEEQAKRQQEEEAAAQMKEKEESIQLHQE. The 264-residue stretch at 168-431 folds into the MIF4G 1 domain; it reads LKKNTAFVKK…ENMPDLPQDK (264 aa). Basic and acidic residues-rich tracts occupy residues 428–439 and 490–513; these read PQDKPTPEEHGP and CQNK…KEVS. The stretch at 487 to 559 forms a coiled coil; the sequence is EKSCQNKESN…EQEQEDEEAS (73 aa). 2 consecutive MIF4G domains span residues 569–758 and 773–986; these read DAFL…CNPP and EYVR…LRPK. The segment at 711 to 928 is sufficient for interaction with UPF3A and UPF3B; it reads GRFLFRSPES…IRLVCTILDT (218 aa). The interval 757–1272 is sufficient for interaction with EIF4A1 and EIF1; it reads PPPAEKTVKK…LIFKTGGRRR (516 aa). The tract at residues 839 to 859 is binds to UPF3B; the sequence is EDVGIHVVDGVLEDIRLGMEV. The disordered stretch occupies residues 1018–1098; the sequence is DSKDSMTEGE…DEENTEVMIK (81 aa). The segment covering 1027-1076 has biased composition (acidic residues); that stretch reads ENLEEDEEEEEGGAETEEQSGNESEVNEPEEEEGSDNDDDEGEEEEEENT. Residues 1084–1272 form a sufficient for interaction with UPF1 C-terminus region; sequence KENETDEENT…LIFKTGGRRR (189 aa). Residue Thr-1088 is modified to Phosphothreonine. Interaction with UPF1 regions lie at residues 1105-1129 and 1167-1207; these read VPCV…QQRS and DTMP…AEQE. A necessary for interaction with UPF1 region spans residues 1105–1198; that stretch reads VPCVEDEDFI…PMSSQLAANH (94 aa). The disordered stretch occupies residues 1220 to 1272; that stretch reads NERQEQEDYQEMLQSLAQRPAPANTNRERRPRYQHPKGAPNADLIFKTGGRRR.

In terms of assembly, found in a post-splicing messenger ribonucleoprotein (mRNP) complex. Associates with the exon junction complex (EJC). Interacts with SMG1, EST1A, UPF1, UPF3A, UPF3B, EIF4A1 and EIF1. In terms of tissue distribution, ubiquitous.

The protein localises to the cytoplasm. It is found in the perinuclear region. In terms of biological role, involved in nonsense-mediated decay (NMD) of mRNAs containing premature stop codons by associating with the nuclear exon junction complex (EJC). Recruited by UPF3B associated with the EJC core at the cytoplasmic side of the nuclear envelope and the subsequent formation of an UPF1-UPF2-UPF3 surveillance complex (including UPF1 bound to release factors at the stalled ribosome) is believed to activate NMD. In cooperation with UPF3B stimulates both ATPase and RNA helicase activities of UPF1. Binds spliced mRNA. The sequence is that of Regulator of nonsense transcripts 2 from Homo sapiens (Human).